The primary structure comprises 176 residues: Nucleoside triphosphate/diphosphate phosphatase (176 aa).

The active-site Proton donor is the arginine 23. Positions 87, 103, 105, 107, 120, and 123 each coordinate Mg(2+).

It belongs to the Ntdp family. The cofactor is Mg(2+).

It catalyses the reaction a ribonucleoside 5'-triphosphate + H2O = a ribonucleoside 5'-diphosphate + phosphate + H(+). It carries out the reaction a ribonucleoside 5'-diphosphate + H2O = a ribonucleoside 5'-phosphate + phosphate + H(+). Its function is as follows. Has nucleoside phosphatase activity towards nucleoside triphosphates and nucleoside diphosphates. In Bacillus pumilus (strain SAFR-032), this protein is Nucleoside triphosphate/diphosphate phosphatase.